Reading from the N-terminus, the 87-residue chain is UPF0250 protein ESA_02696 (87 aa).

Belongs to the UPF0250 family.

This chain is UPF0250 protein ESA_02696, found in Cronobacter sakazakii (strain ATCC BAA-894) (Enterobacter sakazakii).